The chain runs to 368 residues: 3-dehydroquinate synthase (368 aa).

Residues 99 to 103 (GVVGD), 123 to 124 (TT), Lys136, and Lys145 each bind NAD(+). Zn(2+) is bound by residues Glu178, His242, and His259.

This sequence belongs to the sugar phosphate cyclases superfamily. Dehydroquinate synthase family. NAD(+) serves as cofactor. It depends on Co(2+) as a cofactor. Zn(2+) is required as a cofactor.

It is found in the cytoplasm. It carries out the reaction 7-phospho-2-dehydro-3-deoxy-D-arabino-heptonate = 3-dehydroquinate + phosphate. It functions in the pathway metabolic intermediate biosynthesis; chorismate biosynthesis; chorismate from D-erythrose 4-phosphate and phosphoenolpyruvate: step 2/7. Catalyzes the conversion of 3-deoxy-D-arabino-heptulosonate 7-phosphate (DAHP) to dehydroquinate (DHQ). The chain is 3-dehydroquinate synthase from Chlorobaculum tepidum (strain ATCC 49652 / DSM 12025 / NBRC 103806 / TLS) (Chlorobium tepidum).